The sequence spans 144 residues: Large ribosomal subunit protein uL11 (144 aa).

Belongs to the universal ribosomal protein uL11 family. In terms of assembly, part of the ribosomal stalk of the 50S ribosomal subunit. Interacts with L10 and the large rRNA to form the base of the stalk. L10 forms an elongated spine to which L12 dimers bind in a sequential fashion forming a multimeric L10(L12)X complex. One or more lysine residues are methylated.

Forms part of the ribosomal stalk which helps the ribosome interact with GTP-bound translation factors. The protein is Large ribosomal subunit protein uL11 of Neisseria meningitidis serogroup A / serotype 4A (strain DSM 15465 / Z2491).